The following is a 691-amino-acid chain: Probable serine/threonine-protein kinase pXi (691 aa).

Residues 18-263 (YEIGSQIGNG…IDQTLKHPWI (246 aa)) enclose the Protein kinase domain. ATP is bound by residues 24-32 (IGNGKFAQV) and Lys47. Asp137 serves as the catalytic Proton acceptor. Disordered stretches follow at residues 314–350 (TPIKSNDENNNNNNNNNNNNNNNEILDKKSNENENEN), 420–447 (ENDSSSSETYSSSSPIENGGGGGDKFTS), 510–536 (QHNNNINNNNNNINNGGSTSINNGNGT), and 600–620 (GGSGCSSSSDESTGGSFKKDK). The segment covering 322-336 (NNNNNNNNNNNNNNN) has biased composition (low complexity). Basic and acidic residues predominate over residues 338-350 (ILDKKSNENENEN). Low complexity-rich tracts occupy residues 423–433 (SSSSETYSSSS), 512–536 (NNNINNNNNNINNGGSTSINNGNGT), and 600–615 (GGSGCSSSSDESTGGS). Residues 642 to 691 (PKETMDKLASVLSNYKQKNQEKSLKVKYEKQKDKYKKLKSQLKKDKSLLK) are a coiled coil.

It belongs to the protein kinase superfamily. CAMK Ser/Thr protein kinase family.

The enzyme catalyses L-seryl-[protein] + ATP = O-phospho-L-seryl-[protein] + ADP + H(+). It catalyses the reaction L-threonyl-[protein] + ATP = O-phospho-L-threonyl-[protein] + ADP + H(+). The protein is Probable serine/threonine-protein kinase pXi (pXi) of Dictyostelium discoideum (Social amoeba).